The sequence spans 167 residues: Phospholipase A2 inhibitor alpha-like protein (167 aa).

The first 19 residues, M1–G19, serve as a signal peptide directing secretion. The 102-residue stretch at G62–E163 folds into the C-type lectin domain. 2 cysteine pairs are disulfide-bonded: C83/C162 and C140/C154.

Belongs to the alpha-type phospholipase A2 inhibitor family. As to quaternary structure, homotrimer.

The protein localises to the secreted. In terms of biological role, has no PLA2 inhibitory activity. The chain is Phospholipase A2 inhibitor alpha-like protein from Elaphe climacophora (Japanese rat snake).